A 92-amino-acid polypeptide reads, in one-letter code: UPF0250 protein PD_0532 (92 aa).

Belongs to the UPF0250 family.

The sequence is that of UPF0250 protein PD_0532 from Xylella fastidiosa (strain Temecula1 / ATCC 700964).